The sequence spans 576 residues: Proline--tRNA ligase (576 aa).

This sequence belongs to the class-II aminoacyl-tRNA synthetase family. ProS type 1 subfamily. Homodimer.

It localises to the cytoplasm. It carries out the reaction tRNA(Pro) + L-proline + ATP = L-prolyl-tRNA(Pro) + AMP + diphosphate. Its function is as follows. Catalyzes the attachment of proline to tRNA(Pro) in a two-step reaction: proline is first activated by ATP to form Pro-AMP and then transferred to the acceptor end of tRNA(Pro). As ProRS can inadvertently accommodate and process non-cognate amino acids such as alanine and cysteine, to avoid such errors it has two additional distinct editing activities against alanine. One activity is designated as 'pretransfer' editing and involves the tRNA(Pro)-independent hydrolysis of activated Ala-AMP. The other activity is designated 'posttransfer' editing and involves deacylation of mischarged Ala-tRNA(Pro). The misacylated Cys-tRNA(Pro) is not edited by ProRS. The chain is Proline--tRNA ligase from Leptospira borgpetersenii serovar Hardjo-bovis (strain L550).